Here is a 291-residue protein sequence, read N- to C-terminus: Protein US2 (291 aa).

An N-acetylglycine; by host; partial modification is found at Gly-2. The segment at 251-270 (PEVPDEQPTSPGRGPQETDP) is disordered.

The protein belongs to the herpesviridae HHV-1 US2 protein family. Interacts with host KRT18.

It localises to the host cytoplasm. It is found in the host nucleus. The sequence is that of Protein US2 from Homo sapiens (Human).